A 208-amino-acid chain; its full sequence is Vacuolar ATPase assembly protein VMA12 (208 aa).

The residue at position 2 (A2) is an N-acetylalanine. The next 2 membrane-spanning stretches (helical) occupy residues 146-166 and 179-199; these read LVIT…CTYL and VLAA…VMVR.

In terms of assembly, accessory component of the multisubunit proton-transporting vacuolar (V)-ATPase protein pump.

It is found in the cytoplasmic vesicle. Its subcellular location is the COPI-coated vesicle membrane. The protein localises to the endoplasmic reticulum-Golgi intermediate compartment membrane. It localises to the endoplasmic reticulum membrane. Functionally, accessory component of the proton-transporting vacuolar (V)-ATPase protein pump involved in intracellular iron homeostasis. In aerobic conditions, required for intracellular iron homeostasis, thus triggering the activity of Fe(2+) prolyl hydroxylase (PHD) enzymes, and leading to HIF1A hydroxylation and subsequent proteasomal degradation. Necessary for endolysosomal acidification and lysosomal degradation. May be involved in Golgi homeostasis. Binds 20(S)-hydroxycholesterol (20(S)-OHC). This is Vacuolar ATPase assembly protein VMA12 from Homo sapiens (Human).